Here is a 339-residue protein sequence, read N- to C-terminus: Probable scoulerine-9-O-methyltransferase OMT3B (339 aa).

Met-161 lines the S-adenosyl-L-methionine pocket. Position 164 (Asp-164) interacts with substrate. S-adenosyl-L-methionine-binding positions include Thr-165, Gly-191, Asp-214, Asp-228–Val-229, and Lys-242. Ser-243–Glu-247 contributes to the substrate binding site. His-246 (proton acceptor) is an active-site residue.

This sequence belongs to the class I-like SAM-binding methyltransferase superfamily. Cation-independent O-methyltransferase family. COMT subfamily.

The catalysed reaction is (S)-scoulerine + S-adenosyl-L-methionine = (S)-tetrahydrocolumbamine + S-adenosyl-L-homocysteine + H(+). It functions in the pathway alkaloid biosynthesis. Its function is as follows. Methyltransferase involved in the biosynthesis of the benzylisoquinoline alkaloid noscapine. Catalyzes the conversion of (S)-scoulerine to (S)-tetrahydrocolumbamine. The polypeptide is Probable scoulerine-9-O-methyltransferase OMT3B (Papaver somniferum (Opium poppy)).